The primary structure comprises 287 residues: Elongation factor Ts (287 aa).

The interval 80-83 (TDFL) is involved in Mg(2+) ion dislocation from EF-Tu.

The protein belongs to the EF-Ts family.

The protein localises to the cytoplasm. Its function is as follows. Associates with the EF-Tu.GDP complex and induces the exchange of GDP to GTP. It remains bound to the aminoacyl-tRNA.EF-Tu.GTP complex up to the GTP hydrolysis stage on the ribosome. The protein is Elongation factor Ts of Pseudomonas savastanoi pv. phaseolicola (strain 1448A / Race 6) (Pseudomonas syringae pv. phaseolicola (strain 1448A / Race 6)).